Here is a 265-residue protein sequence, read N- to C-terminus: Tryptophan synthase alpha chain (265 aa).

Catalysis depends on proton acceptor residues Glu-47 and Asp-58.

It belongs to the TrpA family. In terms of assembly, tetramer of two alpha and two beta chains.

It carries out the reaction (1S,2R)-1-C-(indol-3-yl)glycerol 3-phosphate + L-serine = D-glyceraldehyde 3-phosphate + L-tryptophan + H2O. The protein operates within amino-acid biosynthesis; L-tryptophan biosynthesis; L-tryptophan from chorismate: step 5/5. The alpha subunit is responsible for the aldol cleavage of indoleglycerol phosphate to indole and glyceraldehyde 3-phosphate. This is Tryptophan synthase alpha chain from Methanoregula boonei (strain DSM 21154 / JCM 14090 / 6A8).